A 304-amino-acid chain; its full sequence is Probable aspartoacylase (304 aa).

Zn(2+)-binding residues include histidine 13 and glutamate 16. Residues arginine 55 and 62 to 63 (NR) contribute to the substrate site. Histidine 105 serves as a coordination point for Zn(2+). Substrate is bound by residues glutamate 163 and tyrosine 273.

This sequence belongs to the AspA/AstE family. Aspartoacylase subfamily. Zn(2+) is required as a cofactor.

The catalysed reaction is an N-acyl-L-aspartate + H2O = a carboxylate + L-aspartate. In Prochlorococcus marinus (strain MIT 9313), this protein is Probable aspartoacylase.